The sequence spans 484 residues: tRNA-2-methylthio-N(6)-dimethylallyladenosine synthase (484 aa).

The 121-residue stretch at 29-149 (GVFHIHTLGC…LPKLLDQNRA (121 aa)) folds into the MTTase N-terminal domain. [4Fe-4S] cluster-binding residues include Cys38, Cys78, Cys112, Cys186, Cys190, and Cys193. Positions 172–401 (RASRISSWVA…VALQEQITEE (230 aa)) constitute a Radical SAM core domain. The TRAM domain maps to 404–474 (ATFEGRDVEV…RHNLLADPDV (71 aa)).

This sequence belongs to the methylthiotransferase family. MiaB subfamily. As to quaternary structure, monomer. The cofactor is [4Fe-4S] cluster.

The protein localises to the cytoplasm. The catalysed reaction is N(6)-dimethylallyladenosine(37) in tRNA + (sulfur carrier)-SH + AH2 + 2 S-adenosyl-L-methionine = 2-methylsulfanyl-N(6)-dimethylallyladenosine(37) in tRNA + (sulfur carrier)-H + 5'-deoxyadenosine + L-methionine + A + S-adenosyl-L-homocysteine + 2 H(+). In terms of biological role, catalyzes the methylthiolation of N6-(dimethylallyl)adenosine (i(6)A), leading to the formation of 2-methylthio-N6-(dimethylallyl)adenosine (ms(2)i(6)A) at position 37 in tRNAs that read codons beginning with uridine. This chain is tRNA-2-methylthio-N(6)-dimethylallyladenosine synthase, found in Bifidobacterium longum (strain DJO10A).